The primary structure comprises 349 residues: [LysW]-L-2-aminoadipate/[LysW]-L-glutamate phosphate reductase (349 aa).

10–13 (SGYT) provides a ligand contact to NADP(+). Residue Cys150 is part of the active site. Residue Asn316 coordinates NADP(+).

It belongs to the NAGSA dehydrogenase family. Type 1 subfamily. LysY sub-subfamily.

The protein resides in the cytoplasm. It carries out the reaction [amino-group carrier protein]-C-terminal-N-(1-carboxy-5-oxopentan-1-yl)-L-glutamine + phosphate + NADP(+) = [amino-group carrier protein]-C-terminal-N-(1-carboxy-5-phosphooxy-5-oxopentan-1-yl)-L-glutamine + NADPH + H(+). It catalyses the reaction [amino-group carrier protein]-C-terminal-gamma-(L-glutamyl-5-semialdehyde)-L-glutamate + phosphate + NADP(+) = [amino-group carrier protein]-C-terminal-gamma-(5-phospho-L-glutamyl)-L-glutamate + NADPH + H(+). The protein operates within amino-acid biosynthesis; L-lysine biosynthesis via AAA pathway; L-lysine from L-alpha-aminoadipate (Thermus route): step 3/5. It functions in the pathway amino-acid biosynthesis; L-arginine biosynthesis. Involved in both the arginine and lysine biosynthetic pathways. The polypeptide is [LysW]-L-2-aminoadipate/[LysW]-L-glutamate phosphate reductase (Sulfurisphaera tokodaii (strain DSM 16993 / JCM 10545 / NBRC 100140 / 7) (Sulfolobus tokodaii)).